The following is a 1034-amino-acid chain: Presequence protease, mitochondrial (1034 aa).

The N-terminal 29 residues, 1–29, are a transit peptide targeting the mitochondrion; the sequence is MLKGGMLSRWKMWSPQYKILRNHLINFKS. Histidine 128 provides a ligand contact to Zn(2+). The active-site Proton acceptor is glutamate 131. Positions 132 and 229 each coordinate Zn(2+).

The protein belongs to the peptidase M16 family. PreP subfamily. In terms of assembly, homodimer. It depends on Zn(2+) as a cofactor.

The protein resides in the mitochondrion. ATP-independent protease that degrades mitochondrial transit peptides after their cleavage. Also degrades other unstructured peptides. This Drosophila melanogaster (Fruit fly) protein is Presequence protease, mitochondrial.